Here is a 95-residue protein sequence, read N- to C-terminus: Probable dolichol-phosphate mannosyltransferase subunit 3 (95 aa).

2 helical membrane-spanning segments follow: residues 10–30 (AHVI…VPVL) and 44–64 (APFF…VYGV).

It belongs to the DPM3 family.

Its subcellular location is the endoplasmic reticulum membrane. It participates in protein modification; protein glycosylation. Its function is as follows. Stabilizer subunit of the dolichol-phosphate-mannose synthase complex. In Caenorhabditis elegans, this protein is Probable dolichol-phosphate mannosyltransferase subunit 3 (dpm-3).